Consider the following 1051-residue polypeptide: Ubiquitin-activating enzyme E1 2 (1051 aa).

Over residues 1–32 the composition is skewed to basic and acidic residues; that stretch reads MLPRKREIVAGEVEDLQKKTRAGEGEATREEG. Residues 1–42 form a disordered region; it reads MLPRKREIVAGEVEDLQKKTRAGEGEATREEGDAAMAGRGNE. 2 repeat units span residues 56–194 and 453–605. The 2 approximate repeats stretch occupies residues 56 to 605; it reads GRETMKPLFG…GAKCNTQMVI (550 aa). Residues Ala472, Asp498, Arg509, Lys522, and 570–571 contribute to the ATP site; that span reads DN. The active-site Glycyl thioester intermediate is the Cys626.

It belongs to the ubiquitin-activating E1 family. In terms of assembly, monomer.

It catalyses the reaction ATP + ubiquitin + [E1 ubiquitin-activating enzyme]-L-cysteine = AMP + diphosphate + S-ubiquitinyl-[E1 ubiquitin-activating enzyme]-L-cysteine.. It participates in protein modification; protein ubiquitination. Functionally, activates ubiquitin by first adenylating its C-terminal glycine residue with ATP, and thereafter linking this residue to the side chain of a cysteine residue in E1, yielding a ubiquitin-E1 thioester and free AMP. This chain is Ubiquitin-activating enzyme E1 2 (UBA2), found in Triticum aestivum (Wheat).